Reading from the N-terminus, the 382-residue chain is MFLKAVVLTLSLVAVTGAQAEVSANQVATVVWDYFSQLSNNAKEAVEHLQKSELTQQLNALFQDKIGQVNTYTDNLQKKLVSFAMELHERLRKDSEKLKEEIRKELEELRAGLLPHADEVSRKIGDNMHELQQRLGPYAEELRTQVNTHAEHLRNQLTAHAQRMETTLRQNVGNLQASLTPYADELKAKIDQNVEELKGHLTPYADELKVKIDQNVEDLRRSLAPYAQDVQEKLNHQLEGLAFQMKKNAEELKAKISANADELRQKLVPVAEVVRGKLRDNTEELQKSLAELSSHLDRQVEEFRRNMGPYGETFNKALLQQVEELRQKLGPYAGDVEDHLSFLEKDLRDKVNSFFSTLEEKENQDMLVAVPELQLTPVPLES.

An N-terminal signal peptide occupies residues 1–20 (MFLKAVVLTLSLVAVTGAQA). Tandem repeats lie at residues 33-54 (DYFSQLSNNAKEAVEHLQKSEL), 60-81 (ALFQDKIGQVNTYTDNLQKKLV), 82-103 (SFAMELHERLRKDSEKLKEEIR), 115-136 (PHADEVSRKIGDNMHELQQRLG), 137-158 (PYAEELRTQVNTHAEHLRNQLT), 159-180 (AHAQRMETTLRQNVGNLQASLT), 181-202 (PYADELKAKIDQNVEELKGHLT), 203-224 (PYADELKVKIDQNVEDLRRSLA), 225-246 (PYAQDVQEKLNHQLEGLAFQMK), 247-268 (KNAEELKAKISANADELRQKLV), 269-286 (PVAEVVRGKLRDNTEELQ), 287-308 (KSLAELSSHLDRQVEEFRRNMG), and 309-330 (PYGETFNKALLQQVEELRQKLG). Positions 33 to 330 (DYFSQLSNNA…QVEELRQKLG (298 aa)) are 13 X 22 AA approximate tandem repeats.

It belongs to the apolipoprotein A1/A4/E family. As to quaternary structure, homodimer. In terms of processing, phosphorylation sites are present in the extracellular medium.

The protein resides in the secreted. In terms of biological role, may have a role in chylomicrons and VLDL secretion and catabolism. Required for efficient activation of lipoprotein lipase by ApoC-II; potent activator of LCAT. Apoa-IV is a major component of HDL and chylomicrons. This chain is Apolipoprotein A-IV (APOA4), found in Mirounga angustirostris (Northern elephant seal).